The primary structure comprises 205 residues: Carboxysome shell protein CsoS1D (205 aa).

BMC circularly permuted domains lie at Glu-3–Tyr-100 and Val-106–Ser-205. A Gates the pore motif is present at residues Glu-68–Arg-69.

The protein belongs to the EutL/PduB family. As to quaternary structure, homotrimer. Forms a dimer of stacked trimers, the same faces interact. Probably forms a CsoS1-CsoS1D-CsoS2 complex.

It is found in the carboxysome. Functionally, part of the carboxysome shell, a polyhedral inclusion where RuBisCO (ribulose bisphosphate carboxylase, cbbL-cbbS) is sequestered. It may control transport of RuBisCO reactants in and out of the carboxysome. The sequence is that of Carboxysome shell protein CsoS1D from Hydrogenovibrio crunogenus (strain DSM 25203 / XCL-2) (Thiomicrospira crunogena).